We begin with the raw amino-acid sequence, 165 residues long: Cyclic pyranopterin monophosphate synthase (165 aa).

Residues 83–85 (FCH) and 120–121 (ME) each bind substrate. Residue aspartate 135 is part of the active site.

This sequence belongs to the MoaC family. As to quaternary structure, homohexamer; trimer of dimers.

It carries out the reaction (8S)-3',8-cyclo-7,8-dihydroguanosine 5'-triphosphate = cyclic pyranopterin phosphate + diphosphate. It participates in cofactor biosynthesis; molybdopterin biosynthesis. Functionally, catalyzes the conversion of (8S)-3',8-cyclo-7,8-dihydroguanosine 5'-triphosphate to cyclic pyranopterin monophosphate (cPMP). This is Cyclic pyranopterin monophosphate synthase from Xanthomonas campestris pv. campestris (strain 8004).